The sequence spans 215 residues: Thiamine-phosphate synthase (215 aa).

Residues 37-41 (QLRIK) and N69 contribute to the 4-amino-2-methyl-5-(diphosphooxymethyl)pyrimidine site. Mg(2+) contacts are provided by D70 and D89. S108 is a binding site for 4-amino-2-methyl-5-(diphosphooxymethyl)pyrimidine. 134-136 (TQT) is a binding site for 2-[(2R,5Z)-2-carboxy-4-methylthiazol-5(2H)-ylidene]ethyl phosphate. K137 provides a ligand contact to 4-amino-2-methyl-5-(diphosphooxymethyl)pyrimidine. 2-[(2R,5Z)-2-carboxy-4-methylthiazol-5(2H)-ylidene]ethyl phosphate-binding positions include G166 and 186–187 (VS).

The protein belongs to the thiamine-phosphate synthase family. Mg(2+) serves as cofactor.

The catalysed reaction is 2-[(2R,5Z)-2-carboxy-4-methylthiazol-5(2H)-ylidene]ethyl phosphate + 4-amino-2-methyl-5-(diphosphooxymethyl)pyrimidine + 2 H(+) = thiamine phosphate + CO2 + diphosphate. It carries out the reaction 2-(2-carboxy-4-methylthiazol-5-yl)ethyl phosphate + 4-amino-2-methyl-5-(diphosphooxymethyl)pyrimidine + 2 H(+) = thiamine phosphate + CO2 + diphosphate. It catalyses the reaction 4-methyl-5-(2-phosphooxyethyl)-thiazole + 4-amino-2-methyl-5-(diphosphooxymethyl)pyrimidine + H(+) = thiamine phosphate + diphosphate. It participates in cofactor biosynthesis; thiamine diphosphate biosynthesis; thiamine phosphate from 4-amino-2-methyl-5-diphosphomethylpyrimidine and 4-methyl-5-(2-phosphoethyl)-thiazole: step 1/1. Condenses 4-methyl-5-(beta-hydroxyethyl)thiazole monophosphate (THZ-P) and 2-methyl-4-amino-5-hydroxymethyl pyrimidine pyrophosphate (HMP-PP) to form thiamine monophosphate (TMP). This is Thiamine-phosphate synthase from Yersinia pseudotuberculosis serotype I (strain IP32953).